A 519-amino-acid chain; its full sequence is Maturase K (519 aa).

It belongs to the intron maturase 2 family. MatK subfamily.

It is found in the plastid. The protein resides in the chloroplast. Its function is as follows. Usually encoded in the trnK tRNA gene intron. Probably assists in splicing its own and other chloroplast group II introns. The protein is Maturase K of Keteleeria davidiana (David's keteleeria).